Here is a 280-residue protein sequence, read N- to C-terminus: Bicarbonate transport system permease protein CmpB (280 aa).

The next 7 membrane-spanning stretches (helical) occupy residues 32–52 (PIFGILGFLLLWQLISSAGLI), 99–119 (YSLAAIVGISTGILVGTQPLL), 126–146 (IFQFLRMVAPLAWVPIALVAL), 153–173 (AIFVIFITSVWPILINTTEGV), 198–218 (ILIPSALPYIFTGLRIAIGLA), 219–239 (WLAIIAAEIVMSGIVGIGFFI), and 251–271 (IILAVFYIGAVGLLLDRGIAY). The 179-residue stretch at 88 to 266 (TLASLGRVAQ…YIGAVGLLLD (179 aa)) folds into the ABC transmembrane type-1 domain.

This sequence belongs to the binding-protein-dependent transport system permease family. As to quaternary structure, the complex is composed of two ATP-binding proteins (CmpC and CmpD), a transmembrane protein (CmpB) and a solute-binding protein (CmpA).

It localises to the cell inner membrane. Part of the ABC transporter complex CmpABCD involved in bicarbonate transport. Probably responsible for the translocation of the substrate across the membrane. This Synechocystis sp. (strain ATCC 27184 / PCC 6803 / Kazusa) protein is Bicarbonate transport system permease protein CmpB (cmpB).